The chain runs to 677 residues: NADPH--cytochrome P450 reductase (677 aa).

Gly-2 is subject to N-acetylglycine. The Lumenal portion of the chain corresponds to 2–21 (GDSHVDTSSTVSEAVAEEVS). A helical transmembrane segment spans residues 22–42 (LFSMTDMILFSLIVGLLTYWF). At 43 to 677 (LFRKKKEEVP…KGRYSLDVWS (635 aa)) the chain is on the cytoplasmic side. Residue Ser-63 is modified to Phosphoserine. Residues 80 to 224 (IIVFYGSQTG…DFITWREQFW (145 aa)) form the Flavodoxin-like domain. FMN is bound by residues 86 to 91 (SQTGTA), 138 to 141 (ATYG), 173 to 182 (LGNKTYEHFN), and Asp-208. Residues 279-521 (KNPFLAAVTT…FVRKSQFRLP (243 aa)) enclose the FAD-binding FR-type domain. Arg-298 serves as a coordination point for NADP(+). FAD is bound by residues Arg-424, 454-457 (RYYS), 472-474 (CAV), Tyr-478, and 488-491 (GVAT). NADP(+) is bound by residues Thr-535, 596-597 (SR), 602-606 (KVYVQ), and Asp-638. An FAD-binding site is contributed by Trp-676.

The protein belongs to the NADPH--cytochrome P450 reductase family. This sequence in the N-terminal section; belongs to the flavodoxin family. In the C-terminal section; belongs to the flavoprotein pyridine nucleotide cytochrome reductase family. The cofactor is FAD. FMN serves as cofactor.

The protein localises to the endoplasmic reticulum membrane. It carries out the reaction 2 oxidized [cytochrome P450] + NADPH = 2 reduced [cytochrome P450] + NADP(+) + H(+). Its function is as follows. This enzyme is required for electron transfer from NADP to cytochrome P450 in microsomes. It can also provide electron transfer to heme oxygenase and cytochrome B5. In Homo sapiens (Human), this protein is NADPH--cytochrome P450 reductase.